Here is a 247-residue protein sequence, read N- to C-terminus: 2,3-bisphosphoglycerate-dependent phosphoglycerate mutase (247 aa).

Residues 8-15, 21-22, arginine 60, 87-90, lysine 98, 114-115, and 183-184 contribute to the substrate site; these read RHGESQWN, TG, ERHY, RR, and GN. The active-site Tele-phosphohistidine intermediate is histidine 9. Catalysis depends on glutamate 87, which acts as the Proton donor/acceptor.

The protein belongs to the phosphoglycerate mutase family. BPG-dependent PGAM subfamily.

It carries out the reaction (2R)-2-phosphoglycerate = (2R)-3-phosphoglycerate. The protein operates within carbohydrate degradation; glycolysis; pyruvate from D-glyceraldehyde 3-phosphate: step 3/5. Catalyzes the interconversion of 2-phosphoglycerate and 3-phosphoglycerate. The polypeptide is 2,3-bisphosphoglycerate-dependent phosphoglycerate mutase (Chlorobaculum tepidum (strain ATCC 49652 / DSM 12025 / NBRC 103806 / TLS) (Chlorobium tepidum)).